Here is a 276-residue protein sequence, read N- to C-terminus: NAD kinase (276 aa).

Aspartate 66 (proton acceptor) is an active-site residue. Residues 66 to 67, 139 to 140, aspartate 168, 179 to 184, and glutamine 234 contribute to the NAD(+) site; these read DG, ND, and TAYNIS.

It belongs to the NAD kinase family. The cofactor is a divalent metal cation.

It is found in the cytoplasm. The catalysed reaction is NAD(+) + ATP = ADP + NADP(+) + H(+). Involved in the regulation of the intracellular balance of NAD and NADP, and is a key enzyme in the biosynthesis of NADP. Catalyzes specifically the phosphorylation on 2'-hydroxyl of the adenosine moiety of NAD to yield NADP. This Campylobacter lari (strain RM2100 / D67 / ATCC BAA-1060) protein is NAD kinase.